Consider the following 199-residue polypeptide: Dephospho-CoA kinase (199 aa).

In terms of domain architecture, DPCK spans 3–199 (RIGLTGGIGS…HCKYLQIAQT (197 aa)). 11–16 (GSGKST) is an ATP binding site.

Belongs to the CoaE family.

The protein localises to the cytoplasm. The catalysed reaction is 3'-dephospho-CoA + ATP = ADP + CoA + H(+). It participates in cofactor biosynthesis; coenzyme A biosynthesis; CoA from (R)-pantothenate: step 5/5. Its function is as follows. Catalyzes the phosphorylation of the 3'-hydroxyl group of dephosphocoenzyme A to form coenzyme A. This is Dephospho-CoA kinase from Coxiella burnetii (strain RSA 493 / Nine Mile phase I).